Reading from the N-terminus, the 114-residue chain is T cell receptor alpha variable 3 (114 aa).

The first 20 residues, 1–20 (MASAPISMLAMLFTLSGLRA), serve as a signal peptide directing secretion. Residues 21–114 (QSVAQPEDQV…SALYFCAVRD (94 aa)) form the Ig-like domain. Cysteine 42 and cysteine 110 form a disulfide bridge. Asparagine 87 carries N-linked (GlcNAc...) asparagine glycosylation.

Alpha-beta TR is a heterodimer composed of an alpha and beta chain; disulfide-linked. The alpha-beta TR is associated with the transmembrane signaling CD3 coreceptor proteins to form the TR-CD3 (TcR or TCR). The assembly of alpha-beta TR heterodimers with CD3 occurs in the endoplasmic reticulum where a single alpha-beta TR heterodimer associates with one CD3D-CD3E heterodimer, one CD3G-CD3E heterodimer and one CD247 homodimer forming a stable octameric structure. CD3D-CD3E and CD3G-CD3E heterodimers preferentially associate with TR alpha and TR beta chains, respectively. The association of the CD247 homodimer is the last step of TcR assembly in the endoplasmic reticulum and is required for transport to the cell surface.

It localises to the cell membrane. V region of the variable domain of T cell receptor (TR) alpha chain that participates in the antigen recognition. Alpha-beta T cell receptors are antigen specific receptors which are essential to the immune response and are present on the cell surface of T lymphocytes. Recognize peptide-major histocompatibility (MH) (pMH) complexes that are displayed by antigen presenting cells (APC), a prerequisite for efficient T cell adaptive immunity against pathogens. Binding of alpha-beta TR to pMH complex initiates TR-CD3 clustering on the cell surface and intracellular activation of LCK that phosphorylates the ITAM motifs of CD3G, CD3D, CD3E and CD247 enabling the recruitment of ZAP70. In turn ZAP70 phosphorylates LAT, which recruits numerous signaling molecules to form the LAT signalosome. The LAT signalosome propagates signal branching to three major signaling pathways, the calcium, the mitogen-activated protein kinase (MAPK) kinase and the nuclear factor NF-kappa-B (NF-kB) pathways, leading to the mobilization of transcription factors that are critical for gene expression and essential for T cell growth and differentiation. The T cell repertoire is generated in the thymus, by V-(D)-J rearrangement. This repertoire is then shaped by intrathymic selection events to generate a peripheral T cell pool of self-MH restricted, non-autoaggressive T cells. Post-thymic interaction of alpha-beta TR with the pMH complexes shapes TR structural and functional avidity. The sequence is that of T cell receptor alpha variable 3 from Homo sapiens (Human).